The chain runs to 610 residues: UvrABC system protein C (610 aa).

A GIY-YIG domain is found at 16 to 94 (SQPGVYRMYD…IKLYQPRYNV (79 aa)). Positions 204-239 (QQVLHQLIERMENASKALNFEEAARIRDQIQAVRRV) constitute a UVR domain.

This sequence belongs to the UvrC family. In terms of assembly, interacts with UvrB in an incision complex.

It localises to the cytoplasm. Its function is as follows. The UvrABC repair system catalyzes the recognition and processing of DNA lesions. UvrC both incises the 5' and 3' sides of the lesion. The N-terminal half is responsible for the 3' incision and the C-terminal half is responsible for the 5' incision. This chain is UvrABC system protein C, found in Serratia proteamaculans (strain 568).